Reading from the N-terminus, the 200-residue chain is Superoxide dismutase [Mn] (200 aa).

Positions 27, 77, 160, and 164 each coordinate Mn(2+).

It belongs to the iron/manganese superoxide dismutase family. Homodimer. Mn(2+) serves as cofactor.

The catalysed reaction is 2 superoxide + 2 H(+) = H2O2 + O2. In terms of biological role, destroys superoxide anion radicals which are normally produced within the cells and which are toxic to biological systems. This Rhizobium meliloti (strain 1021) (Ensifer meliloti) protein is Superoxide dismutase [Mn] (sodB).